The sequence spans 623 residues: Xaa-Pro aminopeptidase 1 (623 aa).

A peptide is bound at residue arginine 77. Lysine 304 bears the N6-acetyllysine mark. Histidine 395 provides a ligand contact to a peptide. Mn(2+)-binding residues include aspartate 415, aspartate 426, and histidine 489. A peptide-binding residues include histidine 489, histidine 498, and glutamate 523. Glutamate 523 and glutamate 537 together coordinate Mn(2+).

This sequence belongs to the peptidase M24B family. In terms of assembly, homodimer. The cofactor is Mn(2+).

Its subcellular location is the cytoplasm. The protein localises to the cytosol. The catalysed reaction is Release of any N-terminal amino acid, including proline, that is linked to proline, even from a dipeptide or tripeptide.. Metalloaminopeptidase that catalyzes the removal of a penultimate prolyl residue from the N-termini of peptides, such as Arg-Pro-Pro. Contributes to the degradation of bradykinin. The sequence is that of Xaa-Pro aminopeptidase 1 from Mus musculus (Mouse).